The sequence spans 136 residues: Nucleoside diphosphate kinase (136 aa).

The ATP site is built by lysine 10, phenylalanine 58, arginine 86, threonine 92, arginine 104, and asparagine 114. Catalysis depends on histidine 117, which acts as the Pros-phosphohistidine intermediate.

It belongs to the NDK family. Homotetramer. Requires Mg(2+) as cofactor.

Its subcellular location is the cytoplasm. It carries out the reaction a 2'-deoxyribonucleoside 5'-diphosphate + ATP = a 2'-deoxyribonucleoside 5'-triphosphate + ADP. The catalysed reaction is a ribonucleoside 5'-diphosphate + ATP = a ribonucleoside 5'-triphosphate + ADP. In terms of biological role, major role in the synthesis of nucleoside triphosphates other than ATP. The ATP gamma phosphate is transferred to the NDP beta phosphate via a ping-pong mechanism, using a phosphorylated active-site intermediate. In Corynebacterium jeikeium (strain K411), this protein is Nucleoside diphosphate kinase.